We begin with the raw amino-acid sequence, 256 residues long: Ubiquinone/menaquinone biosynthesis C-methyltransferase UbiE (256 aa).

Residues Thr78 and Asp99 each contribute to the S-adenosyl-L-methionine site.

This sequence belongs to the class I-like SAM-binding methyltransferase superfamily. MenG/UbiE family.

The enzyme catalyses a 2-demethylmenaquinol + S-adenosyl-L-methionine = a menaquinol + S-adenosyl-L-homocysteine + H(+). It carries out the reaction a 2-methoxy-6-(all-trans-polyprenyl)benzene-1,4-diol + S-adenosyl-L-methionine = a 5-methoxy-2-methyl-3-(all-trans-polyprenyl)benzene-1,4-diol + S-adenosyl-L-homocysteine + H(+). The protein operates within quinol/quinone metabolism; menaquinone biosynthesis; menaquinol from 1,4-dihydroxy-2-naphthoate: step 2/2. It participates in cofactor biosynthesis; ubiquinone biosynthesis. Methyltransferase required for the conversion of demethylmenaquinol (DMKH2) to menaquinol (MKH2) and the conversion of 2-polyprenyl-6-methoxy-1,4-benzoquinol (DDMQH2) to 2-polyprenyl-3-methyl-6-methoxy-1,4-benzoquinol (DMQH2). This Geobacter sulfurreducens (strain ATCC 51573 / DSM 12127 / PCA) protein is Ubiquinone/menaquinone biosynthesis C-methyltransferase UbiE.